We begin with the raw amino-acid sequence, 1071 residues long: Kinesin-like protein KIN-14J (1071 aa).

Positions Lys39–Ser142 constitute a Calponin-homology (CH) domain. The disordered stretch occupies residues Trp157 to Glu181. The segment covering Ser158–Phe173 has biased composition (basic and acidic residues). Positions Glu299–Ser389 form a coiled coil. In terms of domain architecture, Kinesin motor spans Asn472–Val800. Gly556–Thr563 contacts ATP. Positions Gly811–Asn844 form a coiled coil. Disordered regions lie at residues Gly852 to Gly931 and Ala995 to Arg1071. 2 stretches are compositionally biased toward basic and acidic residues: residues Ser910 to Gln921 and Ala995 to Thr1017. Positions Thr1034 to Ala1049 are enriched in polar residues.

It belongs to the TRAFAC class myosin-kinesin ATPase superfamily. Kinesin family. KIN-14 subfamily.

This is Kinesin-like protein KIN-14J from Arabidopsis thaliana (Mouse-ear cress).